We begin with the raw amino-acid sequence, 438 residues long: Gamma-glutamyl phosphate reductase (438 aa).

Belongs to the gamma-glutamyl phosphate reductase family.

It is found in the cytoplasm. It catalyses the reaction L-glutamate 5-semialdehyde + phosphate + NADP(+) = L-glutamyl 5-phosphate + NADPH + H(+). Its pathway is amino-acid biosynthesis; L-proline biosynthesis; L-glutamate 5-semialdehyde from L-glutamate: step 2/2. In terms of biological role, catalyzes the NADPH-dependent reduction of L-glutamate 5-phosphate into L-glutamate 5-semialdehyde and phosphate. The product spontaneously undergoes cyclization to form 1-pyrroline-5-carboxylate. The protein is Gamma-glutamyl phosphate reductase of Natronomonas pharaonis (strain ATCC 35678 / DSM 2160 / CIP 103997 / JCM 8858 / NBRC 14720 / NCIMB 2260 / Gabara) (Halobacterium pharaonis).